We begin with the raw amino-acid sequence, 508 residues long: 2,3-bisphosphoglycerate-independent phosphoglycerate mutase (508 aa).

Mn(2+) contacts are provided by D9 and S59. The active-site Phosphoserine intermediate is S59. Substrate is bound by residues H120, 149–150 (RD), R181, R187, 254–257 (RADR), and K331. Positions 398, 402, 439, 440, and 456 each coordinate Mn(2+).

It belongs to the BPG-independent phosphoglycerate mutase family. Requires Mn(2+) as cofactor.

It carries out the reaction (2R)-2-phosphoglycerate = (2R)-3-phosphoglycerate. Its pathway is carbohydrate degradation; glycolysis; pyruvate from D-glyceraldehyde 3-phosphate: step 3/5. Functionally, catalyzes the interconversion of 2-phosphoglycerate and 3-phosphoglycerate. This chain is 2,3-bisphosphoglycerate-independent phosphoglycerate mutase, found in Halobacterium salinarum (strain ATCC 700922 / JCM 11081 / NRC-1) (Halobacterium halobium).